We begin with the raw amino-acid sequence, 387 residues long: DNA double-strand break repair protein Mre11 (387 aa).

Asp-11, His-13, Asp-52, and Asp-87 together coordinate Mn(2+). Catalysis depends on His-88, which acts as the Proton donor. Mn(2+)-binding residues include His-159, His-190, and His-192.

The protein belongs to the MRE11/RAD32 family. In terms of assembly, homodimer. Forms a heterotetramer composed of two Mre11 subunits and two Rad50 subunits. Interacts with HerA. Mn(2+) serves as cofactor.

Nuclease activity is regulated by Rad50. Its function is as follows. Part of the Rad50/Mre11 complex, which is involved in the early steps of DNA double-strand break (DSB) repair. The complex may facilitate opening of the processed DNA ends to aid in the recruitment of HerA and NurA. Mre11 binds to DSB ends and has both double-stranded 3'-5' exonuclease activity and single-stranded endonuclease activity. The chain is DNA double-strand break repair protein Mre11 from Sulfurisphaera tokodaii (strain DSM 16993 / JCM 10545 / NBRC 100140 / 7) (Sulfolobus tokodaii).